Here is a 368-residue protein sequence, read N- to C-terminus: UPF0284 protein Cyan7425_0342 (368 aa).

Belongs to the UPF0284 family.

In Cyanothece sp. (strain PCC 7425 / ATCC 29141), this protein is UPF0284 protein Cyan7425_0342.